A 1435-amino-acid polypeptide reads, in one-letter code: Guanine nucleotide exchange factor LTE1 (1435 aa).

Residues 25 to 157 (VSKPVNSADL…SCIINLKKNW (133 aa)) form the N-terminal Ras-GEF domain. The disordered stretch occupies residues 235 to 256 (KLQSSNSSKNQRSPSMLLFPDN). A compositionally biased stretch (low complexity) spans 237 to 249 (QSSNSSKNQRSPS). Ser-271 bears the Phosphoserine mark. A disordered region spans residues 338–365 (QSGTLQGTSTTSSLDNNSNSNSRSNTSS). Ser-559 carries the post-translational modification Phosphoserine. The span at 582–606 (KDNSSSRTDENGPQRLLFHETDKTN) shows a compositional bias: basic and acidic residues. The disordered stretch occupies residues 582-689 (KDNSSSRTDE…VRNIVNNTDS (108 aa)). The segment covering 621-632 (SQSQKSMTSSPL) has biased composition (polar residues). Low complexity predominate over residues 654 to 667 (SITYSYDSELSSSS). At Ser-689 the chain carries Phosphoserine. Position 691 is a phosphothreonine (Thr-691). The span at 723-744 (EKNYDNKENQESEYESTKKLDN) shows a compositional bias: basic and acidic residues. The segment at 723-747 (EKNYDNKENQESEYESTKKLDNSLD) is disordered. 2 positions are modified to phosphoserine: Ser-808 and Ser-810. The tract at residues 851-871 (AQNSPLKQTQNPQREFPNGTS) is disordered. Phosphoserine occurs at positions 1028 and 1109. The region spanning 1194–1434 (DSLSVAQQMT…LTQEEINELS (241 aa)) is the Ras-GEF domain.

Belongs to the LTE1 family. In terms of assembly, interacts with CDC24, CDC42, KEL1, KEL2, RAS2 and TEM1. Phosphorylated by CDC28 in a cell cycle-dependent manner and in response to nocodazole. Dephosphorylion by CDC14 triggers LTE1 release from bud cortex during the exit of mitosis.

The protein resides in the cytoplasm. It localises to the bud. Functionally, GDP-GTP exchange factor for TEM1, a Ras-like protein, component of the mitotic exit network (MEN). Activation of TEM1 by LTE1 in the bud ultimately leads to activation of CDC15 followed by the release of CDC14 from the nucleolus, which then inactivates cyclin-dependent kinases (CDKs) activity by several mechanism. Required for TEM1 localization to the bud cortex during mitotic exit. Fine-tunes the timing of the mitotic exit and couples this event with cytokinesis. In terms of biological role, involved in proprotein-processing like proalpha factor-processing in the secretory pathway. In Saccharomyces cerevisiae (strain ATCC 204508 / S288c) (Baker's yeast), this protein is Guanine nucleotide exchange factor LTE1 (LTE1).